The chain runs to 348 residues: MSSEPLVLGIETSCDETGVGIVRGHTLLADAVASSVDEHARFGGVVPEVASRAHLEAMVPTIERACETAGIRLYDVDAIAVTSGPGLAGALMVGVAAAKALAVGLGKPIYGVNHLAAHVAVDQLEHGPLPEPCLALLVSGGHSSLLRVEDVTSGVDPMGATIDDAAGEAFDKVARLLGLPFPGGPYIDRAAREGSTVYVDFPRGLTSRRDLERHRFDFSFSGLKTAVARWVEARERSGEPVPVADVAASFQEAVCDVLTRKAIDAASSAGIEDLLIGGGVAANSRLRVLAEERAAARGIRVRVPRPGLCTDNGAMVAALGAEMVARGRTPSPLDLPADSSLPVTEVLV.

Residues histidine 114 and histidine 118 each coordinate Fe cation. Residues 137 to 141, aspartate 171, glycine 184, aspartate 188, and asparagine 283 each bind substrate; that span reads LVSGG. A Fe cation-binding site is contributed by aspartate 311.

This sequence belongs to the KAE1 / TsaD family. Requires Fe(2+) as cofactor.

The protein resides in the cytoplasm. The enzyme catalyses L-threonylcarbamoyladenylate + adenosine(37) in tRNA = N(6)-L-threonylcarbamoyladenosine(37) in tRNA + AMP + H(+). Required for the formation of a threonylcarbamoyl group on adenosine at position 37 (t(6)A37) in tRNAs that read codons beginning with adenine. Is involved in the transfer of the threonylcarbamoyl moiety of threonylcarbamoyl-AMP (TC-AMP) to the N6 group of A37, together with TsaE and TsaB. TsaD likely plays a direct catalytic role in this reaction. The protein is tRNA N6-adenosine threonylcarbamoyltransferase of Nocardioides sp. (strain ATCC BAA-499 / JS614).